We begin with the raw amino-acid sequence, 859 residues long: Probable helicase A859L (859 aa).

Positions Tyr178–Ala349 constitute a Helicase ATP-binding domain. Residue Met191–Thr198 participates in ATP binding. The DEAH box motif lies at Asp298 to His301. One can recognise a Helicase C-terminal domain in the interval Gln394 to Ser553.

Belongs to the asfivirus helicase A859L family.

The protein is Probable helicase A859L of African swine fever virus (isolate Pig/Kenya/KEN-50/1950) (ASFV).